Here is a 233-residue protein sequence, read N- to C-terminus: Uridylate kinase (233 aa).

ATP contacts are provided by residues lysine 8–glycine 11, glycine 51, and arginine 55. Residues aspartate 68 and threonine 129–threonine 136 contribute to the UMP site. Positions 156, 162, and 165 each coordinate ATP.

It belongs to the UMP kinase family. In terms of assembly, homohexamer.

It is found in the cytoplasm. The enzyme catalyses UMP + ATP = UDP + ADP. The protein operates within pyrimidine metabolism; CTP biosynthesis via de novo pathway; UDP from UMP (UMPK route): step 1/1. With respect to regulation, inhibited by UTP. Catalyzes the reversible phosphorylation of UMP to UDP. This Pseudothermotoga lettingae (strain ATCC BAA-301 / DSM 14385 / NBRC 107922 / TMO) (Thermotoga lettingae) protein is Uridylate kinase.